The sequence spans 366 residues: PTI1-like tyrosine-protein kinase 2 (366 aa).

A compositionally biased stretch (basic and acidic residues) spans 8 to 23 (GDKKGDSDLSNEEVHL). The tract at residues 8–50 (GDKKGDSDLSNEEVHLKSPWQNSEANQKNQKPQAVVKPEAQKE) is disordered. The segment covering 26–39 (PWQNSEANQKNQKP) has biased composition (polar residues). The Protein kinase domain occupies 71 to 353 (FGSKSLIGEG…IVVKALQPLL (283 aa)). ATP-binding positions include 77 to 85 (IGEGSYGRV) and Lys99. Residue Asp203 is the Proton acceptor of the active site.

It belongs to the protein kinase superfamily. Tyr protein kinase family. Interacts with OXI1. Autophosphorylated and phosphorylated by OXI1.

The catalysed reaction is L-tyrosyl-[protein] + ATP = O-phospho-L-tyrosyl-[protein] + ADP + H(+). Strongly activated in response to phosphatidic acid (PA) and xylanase in a OXI1- and PDK1-dependent manner, and, to a lesser extent, by hydrogen peroxide and flagellin in a OXI1-dependent manner. Probable tyrosine-protein kinase involved in oxidative burst-mediated signaling leading to specific genes expression. This chain is PTI1-like tyrosine-protein kinase 2 (PTI12), found in Arabidopsis thaliana (Mouse-ear cress).